The following is a 239-amino-acid chain: 4-hydroxy-tetrahydrodipicolinate reductase (239 aa).

Residues 9-14, 78-80, and 104-107 each bind NAD(+); these read GINGKI, GTT, and APNF. His-134 acts as the Proton donor/acceptor in catalysis. His-135 is a binding site for (S)-2,3,4,5-tetrahydrodipicolinate. The active-site Proton donor is the Lys-138. (S)-2,3,4,5-tetrahydrodipicolinate is bound at residue 144–145; the sequence is GT.

It belongs to the DapB family.

It localises to the cytoplasm. It carries out the reaction (S)-2,3,4,5-tetrahydrodipicolinate + NAD(+) + H2O = (2S,4S)-4-hydroxy-2,3,4,5-tetrahydrodipicolinate + NADH + H(+). It catalyses the reaction (S)-2,3,4,5-tetrahydrodipicolinate + NADP(+) + H2O = (2S,4S)-4-hydroxy-2,3,4,5-tetrahydrodipicolinate + NADPH + H(+). It functions in the pathway amino-acid biosynthesis; L-lysine biosynthesis via DAP pathway; (S)-tetrahydrodipicolinate from L-aspartate: step 4/4. Its function is as follows. Catalyzes the conversion of 4-hydroxy-tetrahydrodipicolinate (HTPA) to tetrahydrodipicolinate. The protein is 4-hydroxy-tetrahydrodipicolinate reductase of Coxiella burnetii (strain CbuG_Q212) (Coxiella burnetii (strain Q212)).